Here is a 499-residue protein sequence, read N- to C-terminus: Glucose-6-phosphate isomerase (499 aa).

The active-site Proton donor is the glutamate 352. Active-site residues include histidine 383 and lysine 487.

It belongs to the GPI family.

The protein localises to the cytoplasm. It catalyses the reaction alpha-D-glucose 6-phosphate = beta-D-fructose 6-phosphate. It participates in carbohydrate biosynthesis; gluconeogenesis. Its pathway is carbohydrate degradation; glycolysis; D-glyceraldehyde 3-phosphate and glycerone phosphate from D-glucose: step 2/4. Its function is as follows. Catalyzes the reversible isomerization of glucose-6-phosphate to fructose-6-phosphate. The protein is Glucose-6-phosphate isomerase of Legionella pneumophila (strain Paris).